Here is a 690-residue protein sequence, read N- to C-terminus: Eukaryotic translation initiation factor 3 subunit B (690 aa).

Positions Met-1–Gly-11 are enriched in basic and acidic residues. The tract at residues Met-1–Asp-33 is disordered. The span at Asn-15–Phe-25 shows a compositional bias: acidic residues. In terms of domain architecture, RRM spans Ser-57–Asp-141. WD repeat units lie at residues Thr-207–Lys-246, Gly-292–Leu-331, Ile-334–Glu-369, Glu-442–Leu-484, and Pro-530–Thr-575. Positions Glu-613–Ile-646 form a coiled coil.

It belongs to the eIF-3 subunit B family. Component of the eukaryotic translation initiation factor 3 (eIF-3) complex. The eIF-3 complex interacts with pix. Interacts with mxt.

The protein resides in the cytoplasm. In terms of biological role, RNA-binding component of the eukaryotic translation initiation factor 3 (eIF-3) complex, which is involved in protein synthesis of a specialized repertoire of mRNAs and, together with other initiation factors, stimulates binding of mRNA and methionyl-tRNAi to the 40S ribosome. The eIF-3 complex specifically targets and initiates translation of a subset of mRNAs involved in cell proliferation. The polypeptide is Eukaryotic translation initiation factor 3 subunit B (Drosophila mojavensis (Fruit fly)).